Reading from the N-terminus, the 605-residue chain is Threonine--tRNA ligase (605 aa).

The segment at 195 to 497 (DHRKVGKELG…LIEEYAGDFP (303 aa)) is catalytic. 3 residues coordinate Zn(2+): Cys-294, His-345, and His-474.

The protein belongs to the class-II aminoacyl-tRNA synthetase family. Homodimer. Zn(2+) serves as cofactor.

The protein resides in the cytoplasm. The enzyme catalyses tRNA(Thr) + L-threonine + ATP = L-threonyl-tRNA(Thr) + AMP + diphosphate + H(+). In terms of biological role, catalyzes the attachment of threonine to tRNA(Thr) in a two-step reaction: L-threonine is first activated by ATP to form Thr-AMP and then transferred to the acceptor end of tRNA(Thr). Also edits incorrectly charged L-seryl-tRNA(Thr). The polypeptide is Threonine--tRNA ligase (Thermosynechococcus vestitus (strain NIES-2133 / IAM M-273 / BP-1)).